The sequence spans 490 residues: Betaine aldehyde dehydrogenase (490 aa).

K(+) is bound by residues T26, I27, and D93. 150-152 (GAW) lines the NAD(+) pocket. K162 serves as the catalytic Charge relay system. NAD(+) is bound at residue 176-179 (KPSE). V180 lines the K(+) pocket. 230–233 (GVAS) is a binding site for NAD(+). L246 contributes to the K(+) binding site. E252 functions as the Proton acceptor in the catalytic mechanism. G254, C286, and E387 together coordinate NAD(+). C286 acts as the Nucleophile in catalysis. C286 is modified (cysteine sulfenic acid (-SOH)). K(+)-binding residues include K457 and G460. The active-site Charge relay system is E464.

It belongs to the aldehyde dehydrogenase family. In terms of assembly, dimer of dimers. Requires K(+) as cofactor.

It carries out the reaction betaine aldehyde + NAD(+) + H2O = glycine betaine + NADH + 2 H(+). It participates in amine and polyamine biosynthesis; betaine biosynthesis via choline pathway; betaine from betaine aldehyde: step 1/1. In terms of biological role, involved in the biosynthesis of the osmoprotectant glycine betaine. Catalyzes the irreversible oxidation of betaine aldehyde to the corresponding acid. This Escherichia coli O7:K1 (strain IAI39 / ExPEC) protein is Betaine aldehyde dehydrogenase.